Reading from the N-terminus, the 130-residue chain is Small ribosomal subunit protein uS8 (130 aa).

It belongs to the universal ribosomal protein uS8 family. As to quaternary structure, part of the 30S ribosomal subunit. Contacts proteins S5 and S12.

Its function is as follows. One of the primary rRNA binding proteins, it binds directly to 16S rRNA central domain where it helps coordinate assembly of the platform of the 30S subunit. The polypeptide is Small ribosomal subunit protein uS8 (Pseudoalteromonas atlantica (strain T6c / ATCC BAA-1087)).